A 1223-amino-acid polypeptide reads, in one-letter code: Glycerophosphocholine phosphodiesterase GDE1 (1223 aa).

Residues Met-1–Lys-213 form the SPX domain. A compositionally biased stretch (basic and acidic residues) spans His-43–Asp-59. Residues His-43–Ala-64 form a disordered region. ANK repeat units follow at residues Tyr-427–Ile-456, Glu-472–Leu-502, Ser-504–Tyr-533, Leu-538–Ile-567, Phe-572–Ile-601, and Gly-605–His-634. The residue at position 653 (Ser-653) is a Phosphoserine. A GP-PDE domain is found at Thr-872–Leu-1217. Residues Glu-911, Asp-913, and His-926 each coordinate a divalent metal cation. Ser-983 is modified (phosphoserine).

The protein belongs to the GDE1 family. Requires a divalent metal cation as cofactor.

The protein resides in the cytoplasm. It catalyses the reaction sn-glycerol 3-phosphocholine + H2O = sn-glycerol 3-phosphate + choline + H(+). The catalysed reaction is sn-glycero-3-phospho-1D-myo-inositol + H2O = myo-inositol + sn-glycerol 3-phosphate + H(+). Its function is as follows. Glycerophosphocholine glycerophosphodiesterase responsible for the hydrolysis of intracellular glycerophosphocholine into glycerol-phosphate and choline. The choline is used for phosphatidyl-choline synthesis. Required for utilization of glycerophosphocholine as phosphate source. May also use glycerophosphoinositol as substrate in vivo. This chain is Glycerophosphocholine phosphodiesterase GDE1, found in Saccharomyces cerevisiae (strain ATCC 204508 / S288c) (Baker's yeast).